The sequence spans 879 residues: Translation initiation factor IF-2 (879 aa).

The segment at 48–261 (EAFPPPPEPA…RPHKSKKQRR (214 aa)) is disordered. Over residues 82-111 (PAADAAAPPAVTTPPSAAPAGATTSAPSDA) the composition is skewed to low complexity. Composition is skewed to pro residues over residues 119 to 142 (PPRP…PSGP), 152 to 163 (SPMPRPMPPRPV), and 173 to 197 (PGIP…PPRP). Low complexity predominate over residues 198–213 (AAGRAAPGRGAPIRLP). Residues 228-246 (PGVGGRGRGAPGGAFGRGP) show a composition bias toward gly residues. Positions 251 to 260 (SRPHKSKKQR) are enriched in basic residues. One can recognise a tr-type G domain in the interval 372 to 543 (PRPPVVTVMG…AILLTADAAL (172 aa)). The G1 stretch occupies residues 381-388 (GHVDHGKT). 381-388 (GHVDHGKT) lines the GTP pocket. Residues 406–410 (GITQH) are G2. Positions 431 to 434 (DTPG) are G3. Residues 431 to 435 (DTPGH) and 485 to 488 (NKID) each bind GTP. Residues 485–488 (NKID) form a G4 region. The interval 521–523 (SAL) is G5.

The protein belongs to the TRAFAC class translation factor GTPase superfamily. Classic translation factor GTPase family. IF-2 subfamily.

It localises to the cytoplasm. In terms of biological role, one of the essential components for the initiation of protein synthesis. Protects formylmethionyl-tRNA from spontaneous hydrolysis and promotes its binding to the 30S ribosomal subunits. Also involved in the hydrolysis of GTP during the formation of the 70S ribosomal complex. This chain is Translation initiation factor IF-2, found in Acidothermus cellulolyticus (strain ATCC 43068 / DSM 8971 / 11B).